Consider the following 156-residue polypeptide: Ribonuclease H (156 aa).

The RNase H type-1 domain maps to 1 to 142 (MNKQVEIFTD…CDELARQAAE (142 aa)). 4 residues coordinate Mg(2+): Asp-10, Glu-48, Asp-70, and Asp-134. The interval 135 to 156 (ELARQAAENPTEDDIGYQPEPQ) is disordered.

This sequence belongs to the RNase H family. In terms of assembly, monomer. Mg(2+) serves as cofactor.

The protein resides in the cytoplasm. The enzyme catalyses Endonucleolytic cleavage to 5'-phosphomonoester.. In terms of biological role, endonuclease that specifically degrades the RNA of RNA-DNA hybrids. This Vibrio cholerae serotype O1 (strain M66-2) protein is Ribonuclease H.